The chain runs to 106 residues: Halilectin 3, beta chain (106 aa).

Residue Asn-65 is glycosylated (N-linked (GlcNAc...) asparagine).

As to quaternary structure, probable heterotrimer consisting of an alpha chain and two beta chains. The alpha chain can probably have different glycosylation states. In terms of processing, glycosylated.

Lectin with affinity for N-acetyl-galactosamine, carragenan and glycoprotein porcine stomach mucin (PSM). Has metal-independent hemagglutinating activity towards erythrocytes from rabbit and human. Hemagglutinating activity is not inhibited by D-galactose, D-glucose, D-mannose, D-fucose, methyl-alpha-D-galactopyranoside, methyl-alpha-D-glucopyranoside, N-acetyl-glucosamine, N-acetyl-mannosamine, D-fructose, alpha-D-lactose, beta-D-lactose, D-lactulose, D-sucrose, fucoidan or glycoproteins thyroglobulin and ovalmucoid. The chain is Halilectin 3, beta chain from Haliclona caerulea (Blue Caribbean sponge).